We begin with the raw amino-acid sequence, 596 residues long: Succinate dehydrogenase flavoprotein subunit (596 aa).

FAD is bound by residues 18–23 (GAGGAG), 41–56 (TKLFPTRSHTVAAQGG), and aspartate 225. Residue histidine 49 is modified to Tele-8alpha-FAD histidine. Positions 246 and 258 each coordinate substrate. Arginine 290 functions as the Proton acceptor in the catalytic mechanism. Residue histidine 357 participates in substrate binding. Glutamate 391 serves as a coordination point for FAD. Arginine 402 contacts substrate. Position 407–408 (407–408 (SL)) interacts with FAD.

It belongs to the FAD-dependent oxidoreductase 2 family. FRD/SDH subfamily. In terms of assembly, part of an enzyme complex containing four subunits: a flavoprotein, an iron-sulfur, cytochrome b-556, and a hydrophobic anchor protein. The cofactor is FAD.

It localises to the cell inner membrane. The enzyme catalyses a quinone + succinate = fumarate + a quinol. Its pathway is carbohydrate metabolism; tricarboxylic acid cycle; fumarate from succinate (bacterial route): step 1/1. This chain is Succinate dehydrogenase flavoprotein subunit (sdhA), found in Rickettsia conorii (strain ATCC VR-613 / Malish 7).